The primary structure comprises 121 residues: Phosphoribosyl-ATP pyrophosphatase (121 aa).

Belongs to the PRA-PH family.

Its subcellular location is the cytoplasm. The enzyme catalyses 1-(5-phospho-beta-D-ribosyl)-ATP + H2O = 1-(5-phospho-beta-D-ribosyl)-5'-AMP + diphosphate + H(+). It functions in the pathway amino-acid biosynthesis; L-histidine biosynthesis; L-histidine from 5-phospho-alpha-D-ribose 1-diphosphate: step 2/9. This is Phosphoribosyl-ATP pyrophosphatase from Nitrosospira multiformis (strain ATCC 25196 / NCIMB 11849 / C 71).